A 160-amino-acid chain; its full sequence is Cytochrome c-type biogenesis protein CcmE (160 aa).

The Cytoplasmic portion of the chain corresponds to 1–7; sequence MTRKQRR. A helical; Signal-anchor for type II membrane protein transmembrane segment spans residues 8 to 28; sequence LFMIFGALGTLGVAVGLILFA. Residues 29–160 lie on the Periplasmic side of the membrane; it reads LSDNIVFFYG…TQGAAAPLIR (132 aa). Positions 122 and 126 each coordinate heme. The disordered stretch occupies residues 140-160; sequence VWQEDGQAKPATQGAAAPLIR.

Belongs to the CcmE/CycJ family.

Its subcellular location is the cell inner membrane. Heme chaperone required for the biogenesis of c-type cytochromes. Transiently binds heme delivered by CcmC and transfers the heme to apo-cytochromes in a process facilitated by CcmF and CcmH. The polypeptide is Cytochrome c-type biogenesis protein CcmE (Beijerinckia indica subsp. indica (strain ATCC 9039 / DSM 1715 / NCIMB 8712)).